The primary structure comprises 375 residues: Non-structural protein NS5 (375 aa).

This is Non-structural protein NS5 (NS-5) from Rottboellia (Sorghum).